Consider the following 489-residue polypeptide: Cobyric acid synthase (489 aa).

Residues 251-444 (GLIIAVIRLP…LHGIFANDTF (194 aa)) form the GATase cobBQ-type domain. The active-site Nucleophile is the Cys-329. The active site involves His-436.

Belongs to the CobB/CobQ family. CobQ subfamily.

It participates in cofactor biosynthesis; adenosylcobalamin biosynthesis. In terms of biological role, catalyzes amidations at positions B, D, E, and G on adenosylcobyrinic A,C-diamide. NH(2) groups are provided by glutamine, and one molecule of ATP is hydrogenolyzed for each amidation. The chain is Cobyric acid synthase from Chloroflexus aurantiacus (strain ATCC 29366 / DSM 635 / J-10-fl).